Reading from the N-terminus, the 77-residue chain is GDVSVVGFDDSPLIAFTSPPLSTVRQPVQAMATAAVGALLEEIEGNPVQRTEFVFQPELVVRGSTAQPPGRVSQVLS.

Putative sugar-binding regulatory protein for the alpha-amylase gene. This is an uncharacterized protein from Streptomyces violaceus (Streptomyces venezuelae).